Consider the following 940-residue polypeptide: Isoleucine--tRNA ligase (940 aa).

Positions 58–68 (PYANGSIHIGH) match the 'HIGH' region motif. Glutamate 564 contributes to the L-isoleucyl-5'-AMP binding site. Positions 605 to 609 (KMSKS) match the 'KMSKS' region motif. Lysine 608 is an ATP binding site. Residues cysteine 903, cysteine 906, cysteine 923, and cysteine 926 each contribute to the Zn(2+) site.

It belongs to the class-I aminoacyl-tRNA synthetase family. IleS type 1 subfamily. Monomer. Zn(2+) is required as a cofactor.

The protein localises to the cytoplasm. It catalyses the reaction tRNA(Ile) + L-isoleucine + ATP = L-isoleucyl-tRNA(Ile) + AMP + diphosphate. Functionally, catalyzes the attachment of isoleucine to tRNA(Ile). As IleRS can inadvertently accommodate and process structurally similar amino acids such as valine, to avoid such errors it has two additional distinct tRNA(Ile)-dependent editing activities. One activity is designated as 'pretransfer' editing and involves the hydrolysis of activated Val-AMP. The other activity is designated 'posttransfer' editing and involves deacylation of mischarged Val-tRNA(Ile). This is Isoleucine--tRNA ligase from Shewanella baltica (strain OS155 / ATCC BAA-1091).